A 220-amino-acid chain; its full sequence is Deoxyribose-phosphate aldolase (220 aa).

Residue D89 is the Proton donor/acceptor of the active site. Residue K151 is the Schiff-base intermediate with acetaldehyde of the active site. K180 functions as the Proton donor/acceptor in the catalytic mechanism.

Belongs to the DeoC/FbaB aldolase family. DeoC type 1 subfamily.

The protein localises to the cytoplasm. It carries out the reaction 2-deoxy-D-ribose 5-phosphate = D-glyceraldehyde 3-phosphate + acetaldehyde. It participates in carbohydrate degradation; 2-deoxy-D-ribose 1-phosphate degradation; D-glyceraldehyde 3-phosphate and acetaldehyde from 2-deoxy-alpha-D-ribose 1-phosphate: step 2/2. In terms of biological role, catalyzes a reversible aldol reaction between acetaldehyde and D-glyceraldehyde 3-phosphate to generate 2-deoxy-D-ribose 5-phosphate. This Thermus thermophilus (strain ATCC BAA-163 / DSM 7039 / HB27) protein is Deoxyribose-phosphate aldolase.